The sequence spans 196 residues: Imidazoleglycerol-phosphate dehydratase (196 aa).

This sequence belongs to the imidazoleglycerol-phosphate dehydratase family.

Its subcellular location is the cytoplasm. The catalysed reaction is D-erythro-1-(imidazol-4-yl)glycerol 3-phosphate = 3-(imidazol-4-yl)-2-oxopropyl phosphate + H2O. The protein operates within amino-acid biosynthesis; L-histidine biosynthesis; L-histidine from 5-phospho-alpha-D-ribose 1-diphosphate: step 6/9. The sequence is that of Imidazoleglycerol-phosphate dehydratase from Caulobacter vibrioides (strain ATCC 19089 / CIP 103742 / CB 15) (Caulobacter crescentus).